The following is a 267-amino-acid chain: Phosphatidylcholine synthase (267 aa).

The Cytoplasmic portion of the chain corresponds to 1-42; the sequence is MILWRIVRPGAAMAYVQTGLVLIAEAMDTQQDSLKPRPAMRA. Residues 43–63 traverse the membrane as a helical segment; sequence AAFSVHVFTAFGAAIALLAML. Over 64 to 69 the chain is Periplasmic; it reads EAVREH. A helical transmembrane segment spans residues 70–90; sequence WAAMFQWLGVALIIDAIDGPI. The Cytoplasmic segment spans residues 91–102; it reads ARRLDVKNVQPN. Residues 103-123 form a helical membrane-spanning segment; that stretch reads WSGDVLDLVVDFVTYVFVPAY. Position 124 (alanine 124) is a topological domain, periplasmic. Residues 125-145 form a helical membrane-spanning segment; it reads IVASGLLLPVAAPLLGVAIIV. Residues 146–162 are Cytoplasmic-facing; the sequence is TSALYFADLRMKADDNH. Residues 163-183 traverse the membrane as a helical segment; the sequence is FRGFPALWNAAAFYLFLLHWP. Residue proline 184 is a topological domain, periplasmic. Residues 185–205 traverse the membrane as a helical segment; it reads LWSTLLVAALVVLTFVPFHVL. Over 206–215 the chain is Cytoplasmic; sequence HPVRVVRLRW. A helical membrane pass occupies residues 216–236; the sequence is LTMSLIGIWAVLSLYTLDMDF. Residues 237–239 are Periplasmic-facing; that stretch reads RVG. A helical transmembrane segment spans residues 240 to 260; sequence PGVTLALCAIALWISFSDALI. Residues 261 to 267 are Cytoplasmic-facing; that stretch reads RFARSFA.

Belongs to the CDP-alcohol phosphatidyltransferase class-I family. Requires Mn(2+) as cofactor.

It localises to the cell inner membrane. The enzyme catalyses a CDP-1,2-diacyl-sn-glycerol + choline = a 1,2-diacyl-sn-glycero-3-phosphocholine + CMP + H(+). In terms of biological role, condenses choline with CDP-diglyceride to produce phosphatidylcholine and CMP. This Bradyrhizobium diazoefficiens (strain JCM 10833 / BCRC 13528 / IAM 13628 / NBRC 14792 / USDA 110) protein is Phosphatidylcholine synthase.